Here is a 506-residue protein sequence, read N- to C-terminus: Ribose import ATP-binding protein RbsA 1 (506 aa).

ABC transporter domains are found at residues 5 to 241 and 254 to 498; these read LALT…VGRR and RDAA…TSDA. 37-44 is a binding site for ATP; that stretch reads GENGAGKS.

This sequence belongs to the ABC transporter superfamily. Ribose importer (TC 3.A.1.2.1) family. In terms of assembly, the complex is composed of an ATP-binding protein (RbsA), two transmembrane proteins (RbsC) and a solute-binding protein (RbsB).

It is found in the cell inner membrane. It carries out the reaction D-ribose(out) + ATP + H2O = D-ribose(in) + ADP + phosphate + H(+). Functionally, part of the ABC transporter complex RbsABC involved in ribose import. Responsible for energy coupling to the transport system. The sequence is that of Ribose import ATP-binding protein RbsA 1 from Burkholderia thailandensis (strain ATCC 700388 / DSM 13276 / CCUG 48851 / CIP 106301 / E264).